A 78-amino-acid polypeptide reads, in one-letter code: MDCCTESACSKPDDDILDIPLDDPGANAAAAKIQASFRGHMARKKIKSGECGRKGPGPGGPGGAGGARGGAGGGPSGD.

At M1 the chain carries N-acetylmethionine. An intrachain disulfide couples C3 to C51. The region spanning 26–47 (ANAAAAKIQASFRGHMARKKIK) is the IQ domain. S36 carries the phosphoserine; by PHK and PKC modification. A disordered region spans residues 39–78 (GHMARKKIKSGECGRKGPGPGGPGGAGGARGGAGGGPSGD). The Collagen-like domain maps to 48–78 (SGECGRKGPGPGGPGGAGGARGGAGGGPSGD). The segment covering 54–78 (KGPGPGGPGGAGGARGGAGGGPSGD) has biased composition (gly residues). R68 carries the post-translational modification Citrulline; partial. Position 68 is an omega-N-methylarginine (R68).

The protein belongs to the neurogranin family. In terms of assembly, interacts with apo-calmodulin; this interaction decreases the affinity of calmodulin for calcium ions. Post-translationally, disulfide bond formation is redox-sensitive. The cysteine residues are readily oxidized by several nitric acid (NO) donors and other oxidants to form intramolecular disulfide. Cys-51 can form a disulfide with any other of the cysteine residues with an order of reactivity Cys-9 &gt; Cys-4 &gt; Cys-3. Phosphorylated at Ser-36 by PHK and PKC, phosphorylation prevents interaction with Calmodulin and interrupts several learning- and memory-associated functions.

It localises to the cytoplasm. The protein localises to the synapse. The protein resides in the cell projection. It is found in the dendritic spine. In terms of biological role, regulates the affinity of calmodulin for calcium. Involved in synaptic plasticity and spatial learning. This chain is Neurogranin (Nrgn), found in Mus musculus (Mouse).